A 121-amino-acid chain; its full sequence is Large ribosomal subunit protein uL22 (121 aa).

Belongs to the universal ribosomal protein uL22 family. In terms of assembly, part of the 50S ribosomal subunit.

Its function is as follows. This protein binds specifically to 23S rRNA; its binding is stimulated by other ribosomal proteins, e.g. L4, L17, and L20. It is important during the early stages of 50S assembly. It makes multiple contacts with different domains of the 23S rRNA in the assembled 50S subunit and ribosome. Functionally, the globular domain of the protein is located near the polypeptide exit tunnel on the outside of the subunit, while an extended beta-hairpin is found that lines the wall of the exit tunnel in the center of the 70S ribosome. The chain is Large ribosomal subunit protein uL22 from Salinibacter ruber (strain DSM 13855 / M31).